Reading from the N-terminus, the 315-residue chain is Cytochrome c biogenesis protein CcsA (315 aa).

The next 8 membrane-spanning stretches (helical) occupy residues 15–35, 39–59, 73–93, 97–117, 144–164, 222–242, 257–277, and 283–303; these read SCFL…GFGG, FSFT…LQLI, LYES…YIEV, TLFL…FTDF, VMIA…AYLV, TIGI…IWAN, WAFI…VGGW, and ALVA…VNLL.

Belongs to the CcmF/CycK/Ccl1/NrfE/CcsA family. May interact with Ccs1.

It is found in the plastid. It localises to the chloroplast thylakoid membrane. Required during biogenesis of c-type cytochromes (cytochrome c6 and cytochrome f) at the step of heme attachment. This Chlorella vulgaris (Green alga) protein is Cytochrome c biogenesis protein CcsA.